Here is a 717-residue protein sequence, read N- to C-terminus: Fatty acid oxidation complex subunit alpha (717 aa).

Positions 1–189 (MIYQSPTIEV…NVGAIDALVA (189 aa)) are enoyl-CoA hydratase/isomerase. Residue Asp-296 participates in substrate binding. A 3-hydroxyacyl-CoA dehydrogenase region spans residues 311 to 717 (KKVNSAAVLG…ANNGSYYQQA (407 aa)). Residues Met-324, Asp-343, 400-402 (VVE), Lys-407, and Ser-429 each bind NAD(+). Catalysis depends on His-450, which acts as the For 3-hydroxyacyl-CoA dehydrogenase activity. Residue Asn-453 coordinates NAD(+). Positions 500 and 660 each coordinate substrate.

In the N-terminal section; belongs to the enoyl-CoA hydratase/isomerase family. It in the C-terminal section; belongs to the 3-hydroxyacyl-CoA dehydrogenase family. In terms of assembly, heterotetramer of two alpha chains (FadB) and two beta chains (FadA).

It catalyses the reaction a (3S)-3-hydroxyacyl-CoA + NAD(+) = a 3-oxoacyl-CoA + NADH + H(+). It carries out the reaction a (3S)-3-hydroxyacyl-CoA = a (2E)-enoyl-CoA + H2O. The enzyme catalyses a 4-saturated-(3S)-3-hydroxyacyl-CoA = a (3E)-enoyl-CoA + H2O. The catalysed reaction is (3S)-3-hydroxybutanoyl-CoA = (3R)-3-hydroxybutanoyl-CoA. It catalyses the reaction a (3Z)-enoyl-CoA = a 4-saturated (2E)-enoyl-CoA. It carries out the reaction a (3E)-enoyl-CoA = a 4-saturated (2E)-enoyl-CoA. It participates in lipid metabolism; fatty acid beta-oxidation. Involved in the aerobic and anaerobic degradation of long-chain fatty acids via beta-oxidation cycle. Catalyzes the formation of 3-oxoacyl-CoA from enoyl-CoA via L-3-hydroxyacyl-CoA. It can also use D-3-hydroxyacyl-CoA and cis-3-enoyl-CoA as substrate. The chain is Fatty acid oxidation complex subunit alpha from Shewanella piezotolerans (strain WP3 / JCM 13877).